The following is a 383-amino-acid chain: Na(+)/H(+) antiporter NhaA (383 aa).

Helical transmembrane passes span Ala-19–Leu-39, Val-56–Ile-76, Ile-92–Leu-112, Gly-122–Gly-142, Ile-151–Phe-171, Ala-174–Leu-194, Leu-212–Leu-232, Val-255–Leu-275, Leu-292–Phe-312, Gly-326–Phe-346, and Val-356–Leu-376.

This sequence belongs to the NhaA Na(+)/H(+) (TC 2.A.33) antiporter family.

It localises to the cell inner membrane. The catalysed reaction is Na(+)(in) + 2 H(+)(out) = Na(+)(out) + 2 H(+)(in). Functionally, na(+)/H(+) antiporter that extrudes sodium in exchange for external protons. This Paramagnetospirillum magneticum (strain ATCC 700264 / AMB-1) (Magnetospirillum magneticum) protein is Na(+)/H(+) antiporter NhaA.